A 470-amino-acid polypeptide reads, in one-letter code: uncharacterized protein (470 aa).

The region spanning 1–337 (MKFGHDFKRA…SLTAQPLFFQ (337 aa)) is the SPX domain. Residues 118 to 145 (ASNVPSTPSDSTQQPPTNTLPSVSASSQ) form a disordered region. The span at 122 to 136 (PSTPSDSTQQPPTNT) shows a compositional bias: low complexity. The RING-type zinc finger occupies 374–413 (CAICSNVAYKPVRLGCSHVFCLHCLIILQKQKVDFCPLCR).

It localises to the cytoplasm. This is an uncharacterized protein from Schizosaccharomyces pombe (strain 972 / ATCC 24843) (Fission yeast).